Reading from the N-terminus, the 78-residue chain is Acyl carrier protein (78 aa).

A Carrier domain is found at 2–77; it reads DDLFKKIQQL…DAYEFIKSQQ (76 aa). S37 bears the O-(pantetheine 4'-phosphoryl)serine mark.

It belongs to the acyl carrier protein (ACP) family. 4'-phosphopantetheine is transferred from CoA to a specific serine of apo-ACP by AcpS. This modification is essential for activity because fatty acids are bound in thioester linkage to the sulfhydryl of the prosthetic group.

It localises to the cytoplasm. The protein operates within lipid metabolism; fatty acid biosynthesis. In terms of biological role, carrier of the growing fatty acid chain in fatty acid biosynthesis. The polypeptide is Acyl carrier protein (Treponema denticola (strain ATCC 35405 / DSM 14222 / CIP 103919 / JCM 8153 / KCTC 15104)).